The primary structure comprises 121 residues: Basic phospholipase A2 homolog textilotoxin B chain (121 aa).

7 disulfides stabilise this stretch: Cys11–Cys72, Cys27–Cys120, Cys29–Cys45, Cys44–Cys101, Cys51–Cys94, Cys61–Cys87, and Cys80–Cys92.

This sequence belongs to the phospholipase A2 family. Group I subfamily. N49 sub-subfamily. As to quaternary structure, heterohexamer. 2 forms exist: 2 A or 2 B chains, 2 C chains and 2 covalently-linked D chains, and 1 A or 1 B, 1 C, 2 covalently-linked D chains and 2 differentially glycosylated covalently-linked D chains. Textilotoxin was originally described as pentameric. As to expression, expressed by the venom gland.

The protein resides in the secreted. In terms of biological role, snake venom oligomeric phospholipase A2 that has potent presynaptic neurotoxicity. Chain B is not itself neurotoxic, but it is essential for the neurotoxicity of textilotoxin. Subunit B possesses a very low phospholipase activity. This is Basic phospholipase A2 homolog textilotoxin B chain from Pseudonaja textilis (Eastern brown snake).